The following is a 1204-amino-acid chain: Exportin-5 (1204 aa).

A necessary for interaction with Ran region spans residues 1–108 (MEMEQVNALC…ANGTLRILEE (108 aa)). Lys-396 carries the N6-acetyllysine modification. The segment at 533 to 640 (ELLQLVLNFE…KQLLSNELLL (108 aa)) is necessary for interaction with ILF3. Residues 641-642 (TQ) form a pre-siRNA binding region.

Belongs to the exportin family. Component of a nuclear export receptor complex composed of XPO5, RAN, dsRNA-binding proteins and dsRNA. Found in a nuclear export complex with XPO5, RAN, EEF1A1, and aminoacylated tRNA. Found in a nuclear export complex with XPO5, RAN, ILF3 and dsRNA. Found in a nuclear export complex with XPO5, RAN and pre-miRNA. Found in a nuclear export complex with XPO5, RAN, ILF3 and minihelix VA1 dsRNA. Found in a nuclear export complex with XPO5, RAN, ILF3, ZNF346 and dsRNA. Interacts with EEF1A1, ILF3, NUP153, NUP214 and ZNF346. Interacts with RAN and cargo proteins in a GTP-dependent manner. Interacts with ADAR/ADAR1 (via DRBM domains). Interacts with SMAD4; mediates nuclear export of SMAD4. Interacts with RAN (GTP-bound form).

It is found in the nucleus. The protein localises to the cytoplasm. Mediates the nuclear export of proteins bearing a double-stranded RNA binding domain (dsRBD) and double-stranded RNAs (cargos). XPO5 in the nucleus binds cooperatively to the RNA and to the GTPase Ran in its active GTP-bound form. Proteins containing dsRBDs can associate with this trimeric complex through the RNA. Docking of this complex to the nuclear pore complex (NPC) is mediated through binding to nucleoporins. Upon transit of a nuclear export complex into the cytoplasm, hydrolysis of Ran-GTP to Ran-GDP (induced by RANBP1 and RANGAP1, respectively) cause disassembly of the complex and release of the cargo from the export receptor. XPO5 then returns to the nuclear compartment by diffusion through the nuclear pore complex, to mediate another round of transport. The directionality of nuclear export is thought to be conferred by an asymmetric distribution of the GTP- and GDP-bound forms of Ran between the cytoplasm and nucleus. Overexpression may in some circumstances enhance RNA-mediated gene silencing (RNAi). Mediates nuclear export of ADAR/ADAR1 in a RanGTP-dependent manner. In terms of biological role, mediates the nuclear export of micro-RNA precursors, which form short hairpins. Also mediates the nuclear export of synthetic short hairpin RNAs used for RNA interference. In some circumstances can also mediate the nuclear export of deacylated and aminoacylated tRNAs. Specifically recognizes dsRNAs that lack a 5'-overhang in a sequence-independent manner, have only a short 3'-overhang, and that have a double-stranded length of at least 15 base-pairs. Binding is dependent on Ran-GTP. The chain is Exportin-5 (Xpo5) from Mus musculus (Mouse).